The primary structure comprises 105 residues: Large ribosomal subunit protein uL24 (105 aa).

The span at 77–93 (DGKPTRVGYRKDDETGK) shows a compositional bias: basic and acidic residues. The segment at 77–105 (DGKPTRVGYRKDDETGKNVRIAKSNGKDL) is disordered.

The protein belongs to the universal ribosomal protein uL24 family. In terms of assembly, part of the 50S ribosomal subunit.

In terms of biological role, one of two assembly initiator proteins, it binds directly to the 5'-end of the 23S rRNA, where it nucleates assembly of the 50S subunit. One of the proteins that surrounds the polypeptide exit tunnel on the outside of the subunit. The sequence is that of Large ribosomal subunit protein uL24 from Mycolicibacterium gilvum (strain PYR-GCK) (Mycobacterium gilvum (strain PYR-GCK)).